The sequence spans 171 residues: Co-chaperone protein HscB (171 aa).

The region spanning 2–74 (DYFTFFGLPA…LMRAEYLLSL (73 aa)) is the J domain.

The protein belongs to the HscB family. Interacts with HscA and stimulates its ATPase activity. Interacts with IscU.

Functionally, co-chaperone involved in the maturation of iron-sulfur cluster-containing proteins. Seems to help targeting proteins to be folded toward HscA. The protein is Co-chaperone protein HscB of Shigella sonnei (strain Ss046).